The following is a 261-amino-acid chain: Cell division protein DivIB (261 aa).

Over 1-27 (MEKGKVVVLEDRVPKLKERRRQKANRR) the chain is Cytoplasmic. Residues 28 to 48 (LIAYLSFFFLFILCVLYFQSP) form a helical membrane-spanning segment. Positions 47–117 (SPLGAVGHVE…PNTIAIHVRE (71 aa)) are alpha. The Extracellular portion of the chain corresponds to 49–261 (LGAVGHVEVS…KEDGDETTSP (213 aa)). Residues 50 to 118 (GAVGHVEVSG…NTIAIHVREW (69 aa)) enclose the POTRA domain. Positions 118–230 (WRRIAYVYDR…YPAIAAALDR (113 aa)) are beta. Residues 231–260 (NVKGVIHLEVGSYFVPYSPPKKEDGDETTS) form a gamma region.

It belongs to the FtsQ/DivIB family. DivIB subfamily.

Its subcellular location is the cell membrane. Its function is as follows. Cell division protein that may be involved in stabilizing or promoting the assembly of the division complex. The chain is Cell division protein DivIB from Geobacillus kaustophilus (strain HTA426).